Reading from the N-terminus, the 492-residue chain is Acyl-CoA-binding domain-containing protein 5 (492 aa).

The region spanning 8-97 (HATRFEAAVK…MKKILESMPM (90 aa)) is the ACB domain. An acyl-CoA is bound by residues 19-28 (IQSLPKNGSF), 39-43 (YSFYK), Lys65, and Tyr84. Disordered regions lie at residues 141–162 (AVNG…GLRE) and 335–399 (VKCG…DRGP). Residues 153-162 (AESEEEGLRE) show a composition bias toward acidic residues. Residues 335–360 (VKCGGEDGKASNGAPHKEKKDGEKAD) are compositionally biased toward basic and acidic residues. Residues 378 to 388 (GSQGGQMGNGG) are compositionally biased toward gly residues. Residues 389-399 (DGERWGSDRGP) show a composition bias toward basic and acidic residues. Positions 405-431 (EQIAVVLMRLQEDMQNVLQRLHMLEAV) form a coiled coil. A helical membrane pass occupies residues 464 to 484 (GVLAFAIVWPFIAQWLVHVYL).

It belongs to the ATG37 family.

Its subcellular location is the peroxisome membrane. Acyl-CoA binding protein which acts as the peroxisome receptor for pexophagy but is dispensable for aggrephagy and nonselective autophagy. Binds medium- and long-chain acyl-CoA esters. The sequence is that of Acyl-CoA-binding domain-containing protein 5 (ACBD5) from Gallus gallus (Chicken).